The chain runs to 566 residues: Autophagy-related protein 22-1 (566 aa).

A helical membrane pass occupies residues 38 to 58; it reads YPIAAEVFAVVAVGAFLPVIL. N-linked (GlcNAc...) asparagine glycosylation is present at Asn-103. The next 3 helical transmembrane spans lie at 110–130, 146–168, and 179–199; these read SFAM…LVCF, AFAY…VYFL, and SLGC…ANHA. An N-linked (GlcNAc...) asparagine glycan is attached at Asn-200. Helical transmembrane passes span 242 to 262, 278 to 298, 351 to 371, 382 to 402, 416 to 436, 451 to 471, 488 to 510, and 519 to 539; these read GYGY…LWLF, VILL…LLWL, FLIS…TAVL, IAIA…AFAW, ILLC…LGFI, WEIY…SSYA, FALY…GWLV, and AFIF…MLDV. Positions 547-566 are disordered; it reads KAMADGEGRGRGTYERVREE.

This sequence belongs to the ATG22 family.

Its subcellular location is the vacuole membrane. Its function is as follows. Vacuolar effluxer which mediate the efflux of amino acids resulting from autophagic degradation. The release of autophagic amino acids allows the maintenance of protein synthesis and viability during nitrogen starvation. The chain is Autophagy-related protein 22-1 (ATG22-1) from Phaeosphaeria nodorum (strain SN15 / ATCC MYA-4574 / FGSC 10173) (Glume blotch fungus).